A 982-amino-acid chain; its full sequence is Cell division cycle-associated protein 2 (982 aa).

Residues V75–Q87 show a composition bias toward polar residues. Positions V75 to V97 are disordered. Phosphoserine is present on residues S100, S122, and S133. Disordered stretches follow at residues S192–S216 and T274–S315. Polar residues-rich tracts occupy residues S207–S216 and P275–S315. Phosphoserine is present on residues S286, S296, and S306. The residue at position 309 (T309) is a Phosphothreonine. In terms of domain architecture, PP1-binding spans K379 to D436. Phosphoserine is present on residues S390 and S397. Disordered stretches follow at residues A400–S473, T489–R545, K568–V638, and A651–Q716. Phosphothreonine is present on T402. S424 bears the Phosphoserine mark. Composition is skewed to polar residues over residues S451–S473 and T498–A512. Positions K518 to R545 are enriched in basic residues. Phosphoserine is present on residues S572 and S595. Residues A651–N668 are compositionally biased toward polar residues. Residues T669–T685 show a composition bias toward basic and acidic residues. Phosphoserine is present on S735. K741 is covalently cross-linked (Glycyl lysine isopeptide (Lys-Gly) (interchain with G-Cter in SUMO2)). A disordered region spans residues E910–P982. A Phosphoserine modification is found at S913. Residues V931–S942 show a composition bias toward low complexity. Position 950 is a phosphoserine (S950). Polar residues predominate over residues C952–Q964. Phosphoserine is present on S973.

In terms of assembly, interacts with PPP1CC. Post-translationally, phosphorylated by CDK1. May regulate its subcellular location.

It is found in the nucleus. Regulator of chromosome structure during mitosis required for condensin-depleted chromosomes to retain their compact architecture through anaphase. Acts by mediating the recruitment of phopsphatase PP1-gamma subunit (PPP1CC) to chromatin at anaphase and into the following interphase. At anaphase onset, its association with chromatin targets a pool of PPP1CC to dephosphorylate substrates. This is Cell division cycle-associated protein 2 (Cdca2) from Mus musculus (Mouse).